The primary structure comprises 161 residues: Transcriptional regulator MraZ (161 aa).

2 consecutive SpoVT-AbrB domains span residues 7-55 (RYTN…GPAF) and 84-127 (SAEL…EPGA).

This sequence belongs to the MraZ family. In terms of assembly, forms oligomers.

It is found in the cytoplasm. It localises to the nucleoid. This Parvibaculum lavamentivorans (strain DS-1 / DSM 13023 / NCIMB 13966) protein is Transcriptional regulator MraZ.